A 221-amino-acid chain; its full sequence is Probable lipoprotein CT_734 (221 aa).

A signal peptide spans 1–24 (MKKFIYKYSFGALLLLSGLSGLSS). Cysteine 25 is lipidated: N-palmitoyl cysteine. The S-diacylglycerol cysteine moiety is linked to residue cysteine 25.

This sequence belongs to the chlamydial CPn_0875/CT_734/TC_0107 family.

Its subcellular location is the cell membrane. This Chlamydia trachomatis serovar D (strain ATCC VR-885 / DSM 19411 / UW-3/Cx) protein is Probable lipoprotein CT_734.